Here is a 338-residue protein sequence, read N- to C-terminus: MVGRVQPDRKQLPLVLLRLLCLLPTGLPVRSVDFNRGTDNITVRQGDTAILRCVVEDKNSKVAWLNRSGIIFAGHDKWSLDPRVELEKRHALEYSLRIQKVDVYDEGSYTCSVQTQHEPKTSQVYLIVQVPPKISNISSDVTVNEGSNVTLVCMANGRPEPVITWRHLTPLGREFEGEEEYLEILGITREQSGKYECKAANEVSSADVKQVKVTVNYPPTITESKSNEATTGRQASLKCEASAVPAPDFEWYRDDTRINSANGLEIKSTEGQSSLTVTNVTEEHYGNYTCVAANKLGVTNASLVLFRPGSVRGINGSISLAVPLWLLAASLFCLLSKC.

A signal peptide spans 1 to 28 (MVGRVQPDRKQLPLVLLRLLCLLPTGLP). Ig-like C2-type domains are found at residues 29–122 (VRSV…PKTS), 132–214 (PKIS…VKVT), and 219–304 (PTIT…ASLV). Asn40 and Asn66 each carry an N-linked (GlcNAc...) asparagine glycan. Cysteines 53 and 111 form a disulfide. Tyr94 carries the phosphotyrosine modification. 2 N-linked (GlcNAc...) asparagine glycosylation sites follow: Asn136 and Asn148. 2 disulfides stabilise this stretch: Cys153–Cys197 and Cys239–Cys290. 3 N-linked (GlcNAc...) asparagine glycosylation sites follow: Asn279, Asn287, and Asn300. A lipid anchor (GPI-anchor amidated asparagine; alternate) is attached at Asn315. Asn315 carries an N-linked (GlcNAc...) asparagine; alternate glycan. Positions 316-338 (GSISLAVPLWLLAASLFCLLSKC) are cleaved as a propeptide — removed in mature form.

This sequence belongs to the immunoglobulin superfamily. IgLON family. In terms of tissue distribution, expressed mostly by neurons comprising limbic-associated cortical and subcortical regions that function in cognition, emotion, memory, and learning.

It is found in the cell membrane. Functionally, mediates selective neuronal growth and axon targeting. Contributes to the guidance of developing axons and remodeling of mature circuits in the limbic system. Essential for normal growth of the hippocampal mossy fiber projection. In Rattus norvegicus (Rat), this protein is Limbic system-associated membrane protein (Lsamp).